Here is a 451-residue protein sequence, read N- to C-terminus: Exodeoxyribonuclease 7 large subunit (451 aa).

It belongs to the XseA family. As to quaternary structure, heterooligomer composed of large and small subunits.

Its subcellular location is the cytoplasm. The enzyme catalyses Exonucleolytic cleavage in either 5'- to 3'- or 3'- to 5'-direction to yield nucleoside 5'-phosphates.. Its function is as follows. Bidirectionally degrades single-stranded DNA into large acid-insoluble oligonucleotides, which are then degraded further into small acid-soluble oligonucleotides. The polypeptide is Exodeoxyribonuclease 7 large subunit (Bacillus cytotoxicus (strain DSM 22905 / CIP 110041 / 391-98 / NVH 391-98)).